We begin with the raw amino-acid sequence, 290 residues long: Small ribosomal subunit biogenesis GTPase RsgA (290 aa).

In terms of domain architecture, CP-type G spans lysine 62–leucine 213. Residues serine 111 to aspartate 114 and glycine 156 to threonine 164 contribute to the GTP site. Zn(2+)-binding residues include cysteine 237, cysteine 242, histidine 244, and cysteine 250.

The protein belongs to the TRAFAC class YlqF/YawG GTPase family. RsgA subfamily. In terms of assembly, monomer. Associates with 30S ribosomal subunit, binds 16S rRNA. It depends on Zn(2+) as a cofactor.

It localises to the cytoplasm. One of several proteins that assist in the late maturation steps of the functional core of the 30S ribosomal subunit. Helps release RbfA from mature subunits. May play a role in the assembly of ribosomal proteins into the subunit. Circularly permuted GTPase that catalyzes slow GTP hydrolysis, GTPase activity is stimulated by the 30S ribosomal subunit. This chain is Small ribosomal subunit biogenesis GTPase RsgA, found in Streptococcus agalactiae serotype V (strain ATCC BAA-611 / 2603 V/R).